The chain runs to 249 residues: Carboxy-S-adenosyl-L-methionine synthase (249 aa).

Residues Tyr39, Gly64–Ser66, Asp117–Ile118, Asn132, and Arg199 contribute to the S-adenosyl-L-methionine site.

This sequence belongs to the class I-like SAM-binding methyltransferase superfamily. Cx-SAM synthase family. As to quaternary structure, homodimer.

It carries out the reaction prephenate + S-adenosyl-L-methionine = carboxy-S-adenosyl-L-methionine + 3-phenylpyruvate + H2O. Functionally, catalyzes the conversion of S-adenosyl-L-methionine (SAM) to carboxy-S-adenosyl-L-methionine (Cx-SAM). In Aeromonas hydrophila subsp. hydrophila (strain ATCC 7966 / DSM 30187 / BCRC 13018 / CCUG 14551 / JCM 1027 / KCTC 2358 / NCIMB 9240 / NCTC 8049), this protein is Carboxy-S-adenosyl-L-methionine synthase.